A 376-amino-acid polypeptide reads, in one-letter code: Chaperone protein DnaJ (376 aa).

The 66-residue stretch at 5–70 (DYYEVLGVAR…NKRRMYDSHG (66 aa)) folds into the J domain. A CR-type zinc finger spans residues 132-209 (GVERRIEIPT…CHGNGRVEED (78 aa)). Zn(2+) is bound by residues Cys-145, Cys-148, Cys-161, Cys-164, Cys-183, Cys-186, Cys-197, and Cys-200. CXXCXGXG motif repeat units follow at residues 145–152 (CGDCDGSG), 161–168 (CNVCHGRG), 183–190 (CHNCGGRG), and 197–204 (CKTCHGNG). A disordered region spans residues 223 to 242 (GDRIRLSGEGEAGPAGTPPG).

The protein belongs to the DnaJ family. Homodimer. Zn(2+) is required as a cofactor.

Its subcellular location is the cytoplasm. Participates actively in the response to hyperosmotic and heat shock by preventing the aggregation of stress-denatured proteins and by disaggregating proteins, also in an autonomous, DnaK-independent fashion. Unfolded proteins bind initially to DnaJ; upon interaction with the DnaJ-bound protein, DnaK hydrolyzes its bound ATP, resulting in the formation of a stable complex. GrpE releases ADP from DnaK; ATP binding to DnaK triggers the release of the substrate protein, thus completing the reaction cycle. Several rounds of ATP-dependent interactions between DnaJ, DnaK and GrpE are required for fully efficient folding. Also involved, together with DnaK and GrpE, in the DNA replication of plasmids through activation of initiation proteins. The chain is Chaperone protein DnaJ from Stenotrophomonas maltophilia (strain R551-3).